Consider the following 352-residue polypeptide: MGDWEFLEKLLDQVQEHSTSIGKIWLMVLFIFRILILGLAGESVWGDEQSDFTCNTEQPGCTNVCYDKAFPISHVRYWVLQFLFVSTPTLFYLGHVIYLSRKEEKLKQKESELRALDDKEQVEQAIAIIEKKKLKLYIQEDGTVKIKGALMYTYLTSVIFKSIFEAGFLLGQWYLYGFVMTPIYVCERVPCPHKVDCFVSRPMEKTIFIIFMLVVSLISLFLNVLELIHLICKSMIHALKKYSQYIPANRYPKNEDTYPEKTSETATAPFQDKSYIYLPMNENISYPQYKMPNEQNWVNFNTEQQLAISGNTQSPLGHYSLSAFLPVSPKTHSTVEKASTRASSSASKKQYV.

Residues 2–23 (GDWEFLEKLLDQVQEHSTSIGK) are Cytoplasmic-facing. A helical membrane pass occupies residues 24–46 (IWLMVLFIFRILILGLAGESVWG). Topologically, residues 47-76 (DEQSDFTCNTEQPGCTNVCYDKAFPISHVR) are extracellular. Residues 77-99 (YWVLQFLFVSTPTLFYLGHVIYL) form a helical membrane-spanning segment. Over 100–153 (SRKEEKLKQKESELRALDDKEQVEQAIAIIEKKKLKLYIQEDGTVKIKGALMYT) the chain is Cytoplasmic. Residues 154–176 (YLTSVIFKSIFEAGFLLGQWYLY) traverse the membrane as a helical segment. The Extracellular segment spans residues 177–208 (GFVMTPIYVCERVPCPHKVDCFVSRPMEKTIF). A helical membrane pass occupies residues 209 to 231 (IIFMLVVSLISLFLNVLELIHLI). Topologically, residues 232-352 (CKSMIHALKK…SSSASKKQYV (121 aa)) are cytoplasmic. A disordered region spans residues 332-352 (HSTVEKASTRASSSASKKQYV). Residues 340-352 (TRASSSASKKQYV) are compositionally biased toward low complexity.

The protein belongs to the connexin family. Alpha-type (group II) subfamily. In terms of assembly, a connexon is composed of a hexamer of connexins. In terms of tissue distribution, expressed in ovarian somatic cells, heart, leg muscle, liver and eye but not in brain.

The protein localises to the cell membrane. It localises to the cell junction. Its subcellular location is the gap junction. Functionally, one gap junction consists of a cluster of closely packed pairs of transmembrane channels, the connexons, through which materials of low MW diffuse from one cell to a neighboring cell. The protein is Gap junction alpha-4 protein (gja4) of Xenopus laevis (African clawed frog).